Here is a 663-residue protein sequence, read N- to C-terminus: Inner nuclear membrane protein HEH2 (663 aa).

2 disordered regions span residues 46–188 (QRLQ…ELPN) and 267–289 (ISET…KNIR). The segment covering 47–62 (RLQSSPEASKVRTSIQ) has biased composition (polar residues). Basic and acidic residues predominate over residues 91 to 123 (KTVKDENVETNKRKREQISTDNEAKMQIQEEKS). Serine 123 is modified (phosphoserine). Over residues 124–134 (PKKKRKKRSSK) the composition is skewed to basic residues. Positions 124-137 (PKKKRKKRSSKANK) match the Nuclear localization signal motif. Residues 164–183 (EELHKKDSSDDKPRVKELPK) show a composition bias toward basic and acidic residues. The chain crosses the membrane as a helical span at residues 317-337 (LFIWLWNGAIFLSIICPILFG).

Interacts with SRP1.

It is found in the nucleus inner membrane. The sequence is that of Inner nuclear membrane protein HEH2 (HEH2) from Saccharomyces cerevisiae (strain ATCC 204508 / S288c) (Baker's yeast).